The following is a 199-amino-acid chain: Probable GTP-binding protein EngB (199 aa).

Residues 28–199 form the EngB-type G domain; the sequence is DLPEVALAGR…EAWDTILAEL (172 aa). Residues 36 to 43, 63 to 67, 81 to 84, 148 to 151, and 180 to 182 contribute to the GTP site; these read GRSNVGKS, GKTQL, DVPG, TKAD, and FSS. Mg(2+)-binding residues include Ser-43 and Thr-65.

The protein belongs to the TRAFAC class TrmE-Era-EngA-EngB-Septin-like GTPase superfamily. EngB GTPase family. Mg(2+) serves as cofactor.

In terms of biological role, necessary for normal cell division and for the maintenance of normal septation. This Streptococcus thermophilus (strain CNRZ 1066) protein is Probable GTP-binding protein EngB.